A 432-amino-acid chain; its full sequence is Pentatricopeptide repeat-containing protein 2, mitochondrial (432 aa).

The transit peptide at 1-33 directs the protein to the mitochondrion; the sequence is MQFIKRTFPRRAFVDLLLNRFCLREFATTYSVS. 4 PPR repeats span residues 108 to 142, 143 to 179, 360 to 394, and 395 to 429; these read KTVAYNLVLQYHLAKGHYNAAWSLYNDMKKRQQKP, SDHTYSILLKGFCDAIEKNKQGNFSKLREYSEKVTAS, NLQVYHEKLRNLVQQGQAAECLNTIKRMSHNGPFP, and TQQTFLIVLSLCKRPKFYSYTKSFLDLAKKLNVPV.

It is found in the mitochondrion. Its function is as follows. Mitochondrial RNA-binding protein that acts as a general translation factor. Plays a critical role in the synthesis of all mitochondrial DNA-encoded oxidative phosphorylation subunits, which are essential for mitochondrial respiration. Essential for the expression of iron-sulfur cluster (ISC) proteins as well as other heme proteins related to iron-sensing, and thus plays a key role in iron homeostasis. This Schizosaccharomyces pombe (strain 972 / ATCC 24843) (Fission yeast) protein is Pentatricopeptide repeat-containing protein 2, mitochondrial.